A 228-amino-acid chain; its full sequence is Ribonuclease 3 (228 aa).

The region spanning 5 to 128 (LNRLMARLGY…IIGAMLLDGG (124 aa)) is the RNase III domain. Glutamate 41 lines the Mg(2+) pocket. Aspartate 45 is an active-site residue. 2 residues coordinate Mg(2+): aspartate 114 and glutamate 117. Glutamate 117 is a catalytic residue. Residues 155–225 (DAKTRLQEWL…ASLALEWLEQ (71 aa)) enclose the DRBM domain.

The protein belongs to the ribonuclease III family. In terms of assembly, homodimer. It depends on Mg(2+) as a cofactor.

It is found in the cytoplasm. It catalyses the reaction Endonucleolytic cleavage to 5'-phosphomonoester.. Digests double-stranded RNA. Involved in the processing of primary rRNA transcript to yield the immediate precursors to the large and small rRNAs (23S and 16S). Processes some mRNAs, and tRNAs when they are encoded in the rRNA operon. Processes pre-crRNA and tracrRNA of type II CRISPR loci if present in the organism. This chain is Ribonuclease 3, found in Alcanivorax borkumensis (strain ATCC 700651 / DSM 11573 / NCIMB 13689 / SK2).